The chain runs to 442 residues: Small RNA 2'-O-methyltransferase (442 aa).

Positions 125 and 151 each coordinate S-adenosyl-L-methionine. Mg(2+) is bound by residues E209, E212, H213, and H260.

Belongs to the methyltransferase superfamily. HEN1 family. The cofactor is Mg(2+). In terms of tissue distribution, broadly expressed in the germline and somatic tissues in both hermaphrodites and males.

It localises to the cytoplasm. It is found in the nucleus. Its subcellular location is the nucleoplasm. The protein localises to the cytoplasmic granule. It catalyses the reaction small RNA 3'-end nucleotide + S-adenosyl-L-methionine = small RNA 3'-end 2'-O-methylnucleotide + S-adenosyl-L-homocysteine + H(+). Methyltransferase that adds a 2'-O-methyl group at the 3'-end of PIWI-interacting RNAs (piRNAs) and small interfering RNAs (siRNAs) which are classes of regulatory RNAs that are involved in gene silencing in endogenous RNA interference (RNAi) pathways. Methylation protects the 3'-end of small RNAs from tailing and trimming and could constitute a recognition signal for appropriate argonaute machineries. Methylates and stabilizes 26G-siRNAs (a class of 26 nucleotide siRNAs that possess a monophosphorylated guanine residue at the 5'-end) when they are bound by argonaute protein ergo-1. This occurs in the female germline and embryo, but not in the male germline. Does not methylate 26G-siRNAs bound by argonaute proteins alg-3 or alg-4. Methylates and stabilizes 21U-piRNAs, which are a class of 21 nucleotide piRNAs that possess a uracil residue at the 5'-end, in the male and female germline. In addition, may play a role in exogenous RNAi (exoRNAi) pathways in the germline. In Caenorhabditis elegans, this protein is Small RNA 2'-O-methyltransferase.